A 468-amino-acid chain; its full sequence is MVRWKKPKRFLCRKTQDYERIDDIENNDEDSDDDVILEINHDGEHEDNYRNPMIRMAYIPIVIIAVIYSSFIFFFALFIEASAHTNSKCSEAHEKEKMSSGLLTPPMKHILEDRTKYKNEIKLLKTFNVHLTYSTWINSILEILALIYSFLLLLVDRQYLYPLSQVILYLFTRINFVYTDIYGRFFSPSDVVGAITTEVIYDLIRWQSESKLFKVFPFTPCPLPLLLFPIFLSILQVFANQKHTHVYETVLLIFFRIMTRFAGRRPFILSYQVLRSGIASFQSATSHDIAKTLNKVTHCCLNVFASSAFFVLLMVLVDKQGLDKTPKCLAALYAFAMWMQLATVRYRHFIPLILTVVIELVITGLVSYQTGEFIFSHTAEVKDYVFTVMFTIIAVFRFVFIIILFKVLIYKNPPHSLTTTVLLKPTNIPVTFSSIKAPQELDPTNPYYPQTVYNSNQSKNNLLPLTRD.

The next 6 helical transmembrane spans lie at 59–79 (IPIV…ALFI), 135–155 (TWIN…LLLV), 215–235 (VFPF…LSIL), 297–317 (THCC…MVLV), 348–368 (HFIP…LVSY), and 385–405 (VFTV…IILF).

Its subcellular location is the membrane. This is an uncharacterized protein from Caenorhabditis elegans.